Consider the following 252-residue polypeptide: Probable transcriptional regulatory protein TW504 (252 aa).

It belongs to the TACO1 family.

It localises to the cytoplasm. In Tropheryma whipplei (strain TW08/27) (Whipple's bacillus), this protein is Probable transcriptional regulatory protein TW504.